Reading from the N-terminus, the 111-residue chain is Nucleoid-associated protein Cphamn1_1179 (111 aa).

This sequence belongs to the YbaB/EbfC family. Homodimer.

It localises to the cytoplasm. The protein localises to the nucleoid. Binds to DNA and alters its conformation. May be involved in regulation of gene expression, nucleoid organization and DNA protection. The polypeptide is Nucleoid-associated protein Cphamn1_1179 (Chlorobium phaeobacteroides (strain BS1)).